The primary structure comprises 142 residues: Large ribosomal subunit protein uL11 (142 aa).

It belongs to the universal ribosomal protein uL11 family. In terms of assembly, part of the ribosomal stalk of the 50S ribosomal subunit. Interacts with L10 and the large rRNA to form the base of the stalk. L10 forms an elongated spine to which L12 dimers bind in a sequential fashion forming a multimeric L10(L12)X complex. One or more lysine residues are methylated.

Its function is as follows. Forms part of the ribosomal stalk which helps the ribosome interact with GTP-bound translation factors. The chain is Large ribosomal subunit protein uL11 from Histophilus somni (strain 129Pt) (Haemophilus somnus).